Consider the following 100-residue polypeptide: Small ribosomal subunit protein uS14 (100 aa).

This sequence belongs to the universal ribosomal protein uS14 family. Part of the 30S ribosomal subunit. Contacts proteins S3 and S10.

Binds 16S rRNA, required for the assembly of 30S particles and may also be responsible for determining the conformation of the 16S rRNA at the A site. The polypeptide is Small ribosomal subunit protein uS14 (Prochlorococcus marinus (strain NATL1A)).